Reading from the N-terminus, the 254-residue chain is Small ribosomal subunit protein uS2 (254 aa).

Belongs to the universal ribosomal protein uS2 family.

The polypeptide is Small ribosomal subunit protein uS2 (Oceanobacillus iheyensis (strain DSM 14371 / CIP 107618 / JCM 11309 / KCTC 3954 / HTE831)).